A 392-amino-acid chain; its full sequence is Galactokinase (392 aa).

Positions 37, 43, 44, and 46 each coordinate alpha-D-galactose. ATP-binding residues include glycine 136, glycine 138, serine 140, and serine 141. Aspartate 186 contacts alpha-D-galactose. The active-site Proton acceptor is the aspartate 186. Phosphoserine is present on serine 230. An alpha-D-galactose-binding site is contributed by tyrosine 236.

Belongs to the GHMP kinase family. GalK subfamily. As to quaternary structure, homodimer.

It catalyses the reaction alpha-D-galactose + ATP = alpha-D-galactose 1-phosphate + ADP + H(+). It functions in the pathway carbohydrate metabolism; galactose metabolism. Functionally, catalyzes the transfer of a phosphate from ATP to alpha-D-galactose and participates in the first committed step in the catabolism of galactose. This Mus musculus (Mouse) protein is Galactokinase (Galk1).